The following is a 377-amino-acid chain: Nitric oxide reductase FlRd-NAD(+) reductase (377 aa).

This sequence belongs to the FAD-dependent oxidoreductase family. FAD is required as a cofactor.

The protein localises to the cytoplasm. It catalyses the reaction 2 reduced [nitric oxide reductase rubredoxin domain] + NAD(+) + H(+) = 2 oxidized [nitric oxide reductase rubredoxin domain] + NADH. The protein operates within nitrogen metabolism; nitric oxide reduction. One of at least two accessory proteins for anaerobic nitric oxide (NO) reductase. Reduces the rubredoxin moiety of NO reductase. This is Nitric oxide reductase FlRd-NAD(+) reductase from Escherichia coli O7:K1 (strain IAI39 / ExPEC).